The sequence spans 474 residues: N-lysine methyltransferase SETD6 (474 aa).

Ser14 is subject to Phosphoserine. Residues 63–287 (PKVLVSRQGT…KGHEIFNTYG (225 aa)) form the SET domain. Position 64 is an N6-methylated lysine; by autocatalysis (Lys64). 74–76 (AGY) contacts S-adenosyl-L-methionine. Trp123 is a substrate binding site. The residue at position 180 (Lys180) is an N6-methylated lysine; by autocatalysis. Tyr224 contributes to the S-adenosyl-L-methionine binding site. Residues Ser225 and Gln227 each contribute to the substrate site. Residues 252 to 253 (NH) and Tyr298 each bind S-adenosyl-L-methionine. An N6-methylated lysine; by autocatalysis modification is found at Lys373.

It belongs to the class V-like SAM-binding methyltransferase superfamily. Histone-lysine methyltransferase family. SETD6 subfamily. In terms of assembly, monomer, homodimer and homotrimer; these structures are stabilized in the presence of S-adenosyl-L-methionine (SAM). In terms of processing, automethylated.

It is found in the nucleus. The catalysed reaction is L-lysyl-[protein] + S-adenosyl-L-methionine = N(6)-methyl-L-lysyl-[protein] + S-adenosyl-L-homocysteine + H(+). It carries out the reaction L-lysyl(8)-[histone H2AZ] + S-adenosyl-L-methionine = N(6)-methyl-L-lysyl(8)-[histone H2AZ] + S-adenosyl-L-homocysteine + H(+). Its function is as follows. Protein-lysine N-methyltransferase. Monomethylates 'Lys-310' of the RELA subunit of NF-kappa-B complex, leading to down-regulation of NF-kappa-B transcription factor activity. Monomethylates 'Lys-8' of H2AZ (H2AZK8me1). Required for the maintenance of embryonic stem cell self-renewal. Methylates PAK4. The chain is N-lysine methyltransferase SETD6 (Setd6) from Rattus norvegicus (Rat).